The sequence spans 365 residues: Pyruvate dehydrogenase E1 component subunit beta, mitochondrial (365 aa).

A mitochondrion-targeting transit peptide spans methionine 1–leucine 24. Thiamine diphosphate is bound at residue glutamate 85. K(+) contacts are provided by isoleucine 138, alanine 186, isoleucine 187, and aspartate 189.

Requires thiamine diphosphate as cofactor. As to expression, expressed in salivary glands (at protein level).

It is found in the mitochondrion matrix. The catalysed reaction is N(6)-[(R)-lipoyl]-L-lysyl-[protein] + pyruvate + H(+) = N(6)-[(R)-S(8)-acetyldihydrolipoyl]-L-lysyl-[protein] + CO2. The pyruvate dehydrogenase complex catalyzes the overall conversion of pyruvate to acetyl-CoA and CO(2). Might play a role in regulating synapse structure formation at neuromuscular junctions. Might play a role in maintenance of mitochondrial morphology. This is Pyruvate dehydrogenase E1 component subunit beta, mitochondrial from Drosophila melanogaster (Fruit fly).